A 163-amino-acid chain; its full sequence is Cytochrome b6-f complex subunit 4 (163 aa).

Helical transmembrane passes span 36 to 56, 95 to 115, and 131 to 151; these read LLYIFPVVILGTIACNVGLAV, LLGVLLMVSVPLGLLTVPFLE, and TVFLIGTAVALWLGIGATLPI.

Belongs to the cytochrome b family. PetD subfamily. In terms of assembly, the 4 large subunits of the cytochrome b6-f complex are cytochrome b6, subunit IV (17 kDa polypeptide, petD), cytochrome f and the Rieske protein, while the 4 small subunits are petG, petL, petM and petN. The complex functions as a dimer.

It localises to the plastid. It is found in the chloroplast thylakoid membrane. In terms of biological role, component of the cytochrome b6-f complex, which mediates electron transfer between photosystem II (PSII) and photosystem I (PSI), cyclic electron flow around PSI, and state transitions. The polypeptide is Cytochrome b6-f complex subunit 4 (Phalaenopsis aphrodite subsp. formosana (Moth orchid)).